Here is a 635-residue protein sequence, read N- to C-terminus: 1-deoxy-D-xylulose-5-phosphate synthase (635 aa).

Residues His74 and 115 to 117 each bind thiamine diphosphate; that span reads GHA. Asp146 contributes to the Mg(2+) binding site. Thiamine diphosphate is bound by residues 147 to 148, Asn175, Tyr285, and Glu367; that span reads GA. Asn175 contributes to the Mg(2+) binding site.

This sequence belongs to the transketolase family. DXPS subfamily. Homodimer. It depends on Mg(2+) as a cofactor. Thiamine diphosphate is required as a cofactor.

It carries out the reaction D-glyceraldehyde 3-phosphate + pyruvate + H(+) = 1-deoxy-D-xylulose 5-phosphate + CO2. Its pathway is metabolic intermediate biosynthesis; 1-deoxy-D-xylulose 5-phosphate biosynthesis; 1-deoxy-D-xylulose 5-phosphate from D-glyceraldehyde 3-phosphate and pyruvate: step 1/1. Functionally, catalyzes the acyloin condensation reaction between C atoms 2 and 3 of pyruvate and glyceraldehyde 3-phosphate to yield 1-deoxy-D-xylulose-5-phosphate (DXP). The chain is 1-deoxy-D-xylulose-5-phosphate synthase from Anaeromyxobacter sp. (strain Fw109-5).